Here is a 192-residue protein sequence, read N- to C-terminus: MNSKFILKYFILAFFLVSCQTYQIAYDRFSQVLDSQYDIGVNYSRDGIFKSVISIKYDKLKNKREYFILVRVESRNSSQIKPEKIITDTRFEAKGELVSEDSKRVVYYNDFYDSYFPYDYTTVITEKNIKVEIYKFIISESEFIRFVALGNDNIAAFRIYAFRNDVIVSFNKIPFKKFLDDFNSKVKLLGGS.

Residues 1–18 (MNSKFILKYFILAFFLVS) form the signal peptide. C19 carries the N-palmitoyl cysteine lipid modification. Residue C19 is the site of S-diacylglycerol cysteine attachment.

Its subcellular location is the cell membrane. This is an uncharacterized protein from Borreliella burgdorferi (strain ATCC 35210 / DSM 4680 / CIP 102532 / B31) (Borrelia burgdorferi).